The chain runs to 119 residues: Small ribosomal subunit protein uS17 (119 aa).

The segment covering 1–21 has biased composition (low complexity); it reads MAEAKTGAKATKSAAAGAADG. The interval 1 to 44 is disordered; sequence MAEAKTGAKATKSAAAGAADGASKEKGPKHTPSTPKPRGRRKTR.

The protein belongs to the universal ribosomal protein uS17 family. In terms of assembly, part of the 30S ribosomal subunit.

One of the primary rRNA binding proteins, it binds specifically to the 5'-end of 16S ribosomal RNA. This chain is Small ribosomal subunit protein uS17, found in Mycobacterium marinum (strain ATCC BAA-535 / M).